Here is a 1448-residue protein sequence, read N- to C-terminus: Sister chromatid cohesion protein PDS5 homolog B-A (1448 aa).

The HEAT repeat unit spans residues 383–419 (LLVNDQLLNFVRERTLDKRWRVRKEAMMGLAQIYKKY). The span at 1141 to 1155 (AGKQMLSKSSRMETV) shows a compositional bias: polar residues. Residues 1141–1448 (AGKQMLSKSS…TGRLRSAKKR (308 aa)) form a disordered region. The span at 1156-1168 (SNASSGSNPSSPG) shows a compositional bias: low complexity. Residues 1177-1186 (MELDQSENED) are compositionally biased toward acidic residues. Composition is skewed to basic and acidic residues over residues 1196-1214 (KKSD…LEKP), 1233-1243 (ELSKPAQEPKS), and 1264-1273 (WQEKRLKEDL). A compositionally biased stretch (basic residues) spans 1285–1294 (KKGRRGRPPK). Positions 1286-1298 (KGRRGRPPKSAKM) form a DNA-binding region, a.T hook 1. Positions 1324–1341 (PTDEDDHLEISEEQDFEN) are enriched in acidic residues. The segment covering 1346–1356 (RKGRGSSRRTP) has biased composition (basic residues). 2 consecutive DNA-binding regions (a.T hook) follow at residues 1374–1386 (QKRR…TPTV) and 1390–1402 (KSHV…VVSK). Basic residues predominate over residues 1389-1399 (KKSHVGRPRKV).

This sequence belongs to the PDS5 family. Interacts with the cohesin complex. Post-translationally, phosphorylated in mitotic cells.

Its subcellular location is the nucleus. Functionally, plays a role in androgen-induced proliferative arrest. Required for maintenance of sister chromatid cohesion during mitosis. This chain is Sister chromatid cohesion protein PDS5 homolog B-A (pds5b-a), found in Xenopus laevis (African clawed frog).